We begin with the raw amino-acid sequence, 1009 residues long: DNA ligase 4 (1009 aa).

2 disordered regions span residues 1–34 (METDQDMHDQAMAGEETDLDEKYPNRPQNKAPTL) and 51–72 (KKKPVGPAGNRRKAGPHGLSAA). Basic residues predominate over residues 51 to 65 (KKKPVGPAGNRRKAG). Residues glutamate 315, lysine 317, leucine 318, arginine 322, glutamate 384, phenylalanine 424, glutamate 484, lysine 489, lysine 506, and lysine 508 each contribute to the ATP site. Catalysis depends on lysine 317, which acts as the N6-AMP-lysine intermediate. Glutamate 384 is a Mg(2+) binding site. Glutamate 484 is a Mg(2+) binding site. 2 BRCT domains span residues 715-808 (PSGH…PDLL) and 887-995 (PCGW…QHMP).

It belongs to the ATP-dependent DNA ligase family. Requires Mg(2+) as cofactor.

It localises to the nucleus. It catalyses the reaction ATP + (deoxyribonucleotide)n-3'-hydroxyl + 5'-phospho-(deoxyribonucleotide)m = (deoxyribonucleotide)n+m + AMP + diphosphate.. Its function is as follows. DNA ligase involved in DNA non-homologous end joining (NHEJ); required for double-strand break (DSB) repair. The polypeptide is DNA ligase 4 (lig4) (Emericella nidulans (strain FGSC A4 / ATCC 38163 / CBS 112.46 / NRRL 194 / M139) (Aspergillus nidulans)).